Consider the following 63-residue polypeptide: Cecropin-C (63 aa).

Positions Met1–Ala23 are cleaved as a signal peptide. Arg62 is modified (arginine amide).

The protein belongs to the cecropin family.

Its subcellular location is the secreted. Cecropins have lytic and antibacterial activity against several Gram-positive and Gram-negative bacteria. This Drosophila mauritiana (Fruit fly) protein is Cecropin-C (CecC).